The following is a 660-amino-acid chain: Protein SCARECROW 2 (660 aa).

Disordered stretches follow at residues 1-33 (MGSSSLLLFPSSSSSATHSSYSPSSSSHAITSL) and 190-286 (SDPA…KQRD). A compositionally biased stretch (pro residues) spans 192–229 (PAPPPPPPSHPALLPPDATAPPPPPTSVAALPPPPPAQ). Over residues 259 to 272 (AAAAAAAAAAAAAA) the composition is skewed to low complexity. The stretch at 262–289 (AAAAAAAAAAAAKERKEEQRRKQRDEEG) forms a coiled coil. Positions 273-286 (AKERKEEQRRKQRD) are enriched in basic and acidic residues. The GRAS domain occupies 283 to 653 (KQRDEEGLHL…LCLLTASAWR (371 aa)). A leucine repeat I (LRI) region spans residues 290-354 (LHLLTLLLQC…VSSCLGLYAP (65 aa)). Positions 297-301 (LQCAE) match the LxCxE motif motif. Residues 373–438 (FQVFNGISPF…GGPPRVRLTG (66 aa)) are VHIID. A VHIID motif is present at residues 404 to 408 (VHIID). Residues 448 to 480 (ATGKRLSDFADTLGLPFEFCPVADKAGNLDPEK) are leucine repeat II (LRII). Residues 489–576 (VAVHWLRHSL…QQLLSREIRN (88 aa)) are PFYRE. The SAW stretch occupies residues 579–653 (AVGGPARTGD…LCLLTASAWR (75 aa)).

Belongs to the GRAS family.

The protein localises to the cytoplasm. Its function is as follows. Probable transcription factor involved in asmmetric cell division in the cortex/endodermis progenitor cell and in the process of stomata and ligule formation in leaves. This chain is Protein SCARECROW 2 (SCR2), found in Oryza sativa subsp. indica (Rice).